The sequence spans 727 residues: Elongation factor 2 (727 aa).

The 242-residue stretch at 19-260 (DQIRNMGICA…MAITHLPNPL (242 aa)) folds into the tr-type G domain. GTP contacts are provided by residues 28-35 (AHIDHGKT), 94-98 (DTPGH), and 148-151 (NKVD). Residue H603 is modified to Diphthamide.

This sequence belongs to the TRAFAC class translation factor GTPase superfamily. Classic translation factor GTPase family. EF-G/EF-2 subfamily.

Its subcellular location is the cytoplasm. Functionally, catalyzes the GTP-dependent ribosomal translocation step during translation elongation. During this step, the ribosome changes from the pre-translocational (PRE) to the post-translocational (POST) state as the newly formed A-site-bound peptidyl-tRNA and P-site-bound deacylated tRNA move to the P and E sites, respectively. Catalyzes the coordinated movement of the two tRNA molecules, the mRNA and conformational changes in the ribosome. This chain is Elongation factor 2, found in Methanococcus maripaludis (strain C6 / ATCC BAA-1332).